The chain runs to 375 residues: Protein DEK (375 aa).

A disordered region spans residues Met1 to Lys61. Residue Ser2 is modified to N-acetylserine. Residues Thr13 and Thr15 each carry the phosphothreonine modification. Ser19 is modified (phosphoserine). A compositionally biased stretch (basic and acidic residues) spans Ser19–Glu30. Positions Glu31–Glu47 are enriched in acidic residues. The residue at position 32 (Ser32) is a Phosphoserine; by CK2. Positions Lys48 to Lys61 are enriched in basic and acidic residues. Phosphoserine is present on residues Ser51, Ser72, Ser121, and Ser122. Residues Leu149–Leu183 form the SAP domain. Ser159 is subject to Phosphoserine; by CK2. The disordered stretch occupies residues Met184–Leu325. The span at Pro194 to Gly203 shows a compositional bias: basic residues. Thr199 is subject to Phosphothreonine; by CK2. Ser201 and Ser204 each carry phosphoserine; by CK2. Positions Lys205–Lys221 match the Nuclear localization signal motif. Phosphoserine occurs at positions 210, 227, 230, 231, and 232. Phosphoserine; by CK2 is present on residues Ser243, Ser244, and Ser251. The span at Ser243 to Glu253 shows a compositional bias: acidic residues. A compositionally biased stretch (basic residues) spans Lys258–Val277. The segment covering Lys278–Ser296 has biased composition (low complexity). At Ser279 the chain carries ADP-ribosylserine. Phosphoserine; by CK2 is present on residues Ser287 and Ser288. A phosphothreonine; by CK2 mark is found at Thr289 and Thr290. 5 positions are modified to phosphoserine; by CK2: Ser296, Ser301, Ser303, Ser306, and Ser307. One can recognise a DEK-C domain in the interval Pro319–Ser375. 2 DNA-binding regions span residues Asn337–Tyr351 and Lys367–Lys371.

In terms of assembly, found in a mRNA splicing-dependent exon junction complex (EJC) with DEK, RBM8A, RNPS1, SRRM1 and ALYREF/THOC4. Interacts with histones H2A, H2B, H3, H4, acetylated histone H4, non-phosphorylated DAXX and HDAC2. Component of the B-WICH complex, at least composed of SMARCA5/SNF2H, BAZ1B/WSTF, SF3B1, DEK, MYO1C, ERCC6, MYBBP1A and DDX21. Binds DNA. Post-translationally, phosphorylated by CK2. Phosphorylation fluctuates during the cell cycle with a moderate peak during G(1) phase, and weakens the binding of DEK to DNA. As to expression, ubiquitous. Expressed at relatively high levels.

It localises to the nucleus. Functionally, involved in chromatin organization. This Homo sapiens (Human) protein is Protein DEK (DEK).